The primary structure comprises 660 residues: FAST kinase domain-containing protein 3, mitochondrial (660 aa).

A mitochondrion-targeting transit peptide spans 1 to 57 (MALVTLRRNLYHLSDFRIHGALAALKTQQVNHVHKTVKEHLCPWFWSQHPGPIRVRF). One can recognise an RAP domain in the interval 591-649 (VALCIDGPKRFCLNSKHLLGKEATKQRHLRLLGYQVVQIPYYEIEMLKSRLELVDYLQG).

It belongs to the FAST kinase family.

Its subcellular location is the mitochondrion. Its function is as follows. Required for normal mitochondrial respiration. Increases steady-state levels and half-lives of a subset of mature mitochondrial mRNAs MT-ND2, MT-ND3, MT-CYTB, MT-CO2, and MT-ATP8/6. Promotes MT-CO1 mRNA translation and increases mitochondrial complex IV assembly and activity. In Bos taurus (Bovine), this protein is FAST kinase domain-containing protein 3, mitochondrial (FASTKD3).